The chain runs to 105 residues: MQVLLIATLVASVLAAPTEVSPQTSGGGGGGGGGGGVCRGFLYSNPICCATDILGLACLDGDTPPETPRDAKNFKEICAKNGQQARCCVLPIIDQAVLCIRPLGV.

The N-terminal stretch at 1–15 is a signal peptide; sequence MQVLLIATLVASVLA. Disulfide bonds link Cys38-Cys87, Cys48-Cys78, Cys49-Cys58, and Cys88-Cys99.

Belongs to the cerato-ulmin hydrophobin family. Homotetramer. Further self-assembles to form highly ordered films at water-air interfaces through intermolecular interactions.

It is found in the secreted. It localises to the cell wall. Functionally, aerial growth, conidiation, and dispersal of filamentous fungi in the environment rely upon a capability of their secreting small amphipathic proteins called hydrophobins (HPBs) with low sequence identity. Class I can self-assemble into an outermost layer of rodlet bundles on aerial cell surfaces, conferring cellular hydrophobicity that supports fungal growth, development and dispersal; whereas Class II form highly ordered films at water-air interfaces through intermolecular interactions but contribute nothing to the rodlet structure. HYD1 is a class II hydrophobin that plays roles in conidiation and cuticle-bypassing infection by regulating the transcripts of frequency clock protein frq, and velvet protein vosA, as well as primordium formation via the mitogen-activated protein kinase signaling pathway. Also participates in stress response, including tolerance of mycelia to osmotic and oxidative stresses, and conidia to high or low temperature. Acts as a defensive factor against Calcarisporium cordycipiticola infection, probably via the formation of a physical barrier to inhibit the pathogen infection owing to its hydrophobicity or binding to the effector of C.cordycipiticola, hindering the recognition of the pathogen. Finally, regulates the transcription of the AreA transcription factor at different developmental stages via a positive feedback loop. The polypeptide is Class II hydrophobin 1 (Cordyceps militaris (Caterpillar fungus)).